Reading from the N-terminus, the 146-residue chain is UPF0178 protein BCAH187_A3092 (146 aa).

It belongs to the UPF0178 family.

This Bacillus cereus (strain AH187) protein is UPF0178 protein BCAH187_A3092.